We begin with the raw amino-acid sequence, 117 residues long: Large ribosomal subunit protein eL34 (117 aa).

Phosphoserine is present on Ser12. Positions Ala16–Gln28 are enriched in polar residues. The interval Ala16–His35 is disordered. Residue Lys108 forms a Glycyl lysine isopeptide (Lys-Gly) (interchain with G-Cter in SUMO2) linkage.

Belongs to the eukaryotic ribosomal protein eL34 family. Component of the large ribosomal subunit.

It localises to the cytoplasm. The protein resides in the cytosol. It is found in the endoplasmic reticulum. In terms of biological role, component of the large ribosomal subunit. The ribosome is a large ribonucleoprotein complex responsible for the synthesis of proteins in the cell. In Vicugna pacos (Alpaca), this protein is Large ribosomal subunit protein eL34 (RPL34).